A 301-amino-acid polypeptide reads, in one-letter code: Rhodopsin (301 aa).

Residues 1 to 18 (LHMIHLHWYQYPPMNPMM) lie on the Extracellular side of the membrane. A helical membrane pass occupies residues 19–43 (YPLLLVFMLITGILCLAGNFVTIWV). Over 44–55 (FMNTKSLRTPAN) the chain is Cytoplasmic. The chain crosses the membrane as a helical span at residues 56-78 (LLVVNLAMSDFLMMFTMFPPMMI). Residues 79 to 92 (TCYYHTWTLGATFC) are Extracellular-facing. C92 and C169 form a disulfide bridge. Residues 93 to 115 (EVYAFLGNLCGCASIWTMVFITF) form a helical membrane-spanning segment. Positions 116–118 (DRY) match the 'Ionic lock' involved in activated form stabilization motif. Over 116 to 134 (DRYNVIVKGVAGEPLSTKK) the chain is Cytoplasmic. A helical transmembrane segment spans residues 135 to 155 (ASLWILTVWVLSFTWCVAPFF). At 156 to 182 (GWNRYVPEGNLTGCGTDYLSEDILSRS) the chain is on the extracellular side. N165 carries an N-linked (GlcNAc...) asparagine glycan. A helical transmembrane segment spans residues 183-204 (YLYIYSTWVYFLPLAITIYCYV). Residues 205 to 245 (FIIKAVAAHEKGMRDQAKKMGIKSLRNEEAQKTSAECRLAK) lie on the Cytoplasmic side of the membrane. A helical membrane pass occupies residues 246–267 (IAMTTVALWFIAWTPYLLINWV). Over 268 to 278 (GMFARSYLSPV) the chain is Extracellular. A helical membrane pass occupies residues 279–300 (YTIWGYVFAKANAVYNPIVYAI). K288 carries the N6-(retinylidene)lysine modification.

It belongs to the G-protein coupled receptor 1 family. Opsin subfamily. In terms of assembly, homodimer. Interacts with GNAQ. In terms of processing, contains one covalently linked retinal chromophore.

It is found in the cell projection. The protein resides in the rhabdomere membrane. Functionally, photoreceptor required for image-forming vision at low light intensity. Can use both retinal and 3-dehydroretinal as visual pigment. Light-induced isomerization of 11-cis to all-trans retinal triggers a conformational change that activates signaling via G-proteins. Signaling via GNAQ probably mediates the activation of phospholipase C. The protein is Rhodopsin (RHO) of Lacunicambarus ludovicianus (Painted devil crayfish).